Here is a 464-residue protein sequence, read N- to C-terminus: F-box/FBD/LRR-repeat protein At1g80470 (464 aa).

Positions 15–62 (DWISGLADDLLLQILSKVPTRESVFTSRMSKRWRNLWRHVPALDLDSS) constitute an F-box domain. LRR repeat units follow at residues 96–122 (EEHC…TILS), 123–150 (KVNI…TLYS), 152–178 (VFDA…KFDG), 197–222 (IITH…KLES), 223–249 (MRED…SITD), and 273–298 (DAED…TISA). Positions 359–413 (KEEINLSLVPHCFESSLEYVQLKVPITVSETSSKMELAIYFVRNCSVLKKLMLNE) constitute an FBD domain.

The protein is F-box/FBD/LRR-repeat protein At1g80470 of Arabidopsis thaliana (Mouse-ear cress).